Reading from the N-terminus, the 348-residue chain is Holliday junction branch migration complex subunit RuvB (348 aa).

Residues 1–20 (MKPPARMVSPERRSDDVGDT) form a disordered region. Residues 1 to 183 (MKPPARMVSP…FGIPIRLNFY (183 aa)) form a large ATPase domain (RuvB-L) region. ATP contacts are provided by residues leucine 22, arginine 23, glycine 64, lysine 67, threonine 68, threonine 69, 130–132 (EDF), arginine 173, tyrosine 183, and arginine 220. Threonine 68 is a binding site for Mg(2+). Residues 184 to 254 (TVEELEGIVT…IADHALSALE (71 aa)) form a small ATPAse domain (RuvB-S) region. The head domain (RuvB-H) stretch occupies residues 257–348 (AAGLDAMDRR…FGLFGSEDDA (92 aa)). DNA contacts are provided by arginine 293, arginine 312, and arginine 317.

Belongs to the RuvB family. Homohexamer. Forms an RuvA(8)-RuvB(12)-Holliday junction (HJ) complex. HJ DNA is sandwiched between 2 RuvA tetramers; dsDNA enters through RuvA and exits via RuvB. An RuvB hexamer assembles on each DNA strand where it exits the tetramer. Each RuvB hexamer is contacted by two RuvA subunits (via domain III) on 2 adjacent RuvB subunits; this complex drives branch migration. In the full resolvosome a probable DNA-RuvA(4)-RuvB(12)-RuvC(2) complex forms which resolves the HJ.

It is found in the cytoplasm. It carries out the reaction ATP + H2O = ADP + phosphate + H(+). In terms of biological role, the RuvA-RuvB-RuvC complex processes Holliday junction (HJ) DNA during genetic recombination and DNA repair, while the RuvA-RuvB complex plays an important role in the rescue of blocked DNA replication forks via replication fork reversal (RFR). RuvA specifically binds to HJ cruciform DNA, conferring on it an open structure. The RuvB hexamer acts as an ATP-dependent pump, pulling dsDNA into and through the RuvAB complex. RuvB forms 2 homohexamers on either side of HJ DNA bound by 1 or 2 RuvA tetramers; 4 subunits per hexamer contact DNA at a time. Coordinated motions by a converter formed by DNA-disengaged RuvB subunits stimulates ATP hydrolysis and nucleotide exchange. Immobilization of the converter enables RuvB to convert the ATP-contained energy into a lever motion, pulling 2 nucleotides of DNA out of the RuvA tetramer per ATP hydrolyzed, thus driving DNA branch migration. The RuvB motors rotate together with the DNA substrate, which together with the progressing nucleotide cycle form the mechanistic basis for DNA recombination by continuous HJ branch migration. Branch migration allows RuvC to scan DNA until it finds its consensus sequence, where it cleaves and resolves cruciform DNA. This chain is Holliday junction branch migration complex subunit RuvB, found in Bradyrhizobium sp. (strain BTAi1 / ATCC BAA-1182).